A 336-amino-acid chain; its full sequence is Ornithine carbamoyltransferase, catabolic (336 aa).

Residues 57–60 (STRT), Q84, R108, and 135–138 (HPTQ) contribute to the carbamoyl phosphate site. Residues N169, D233, and 237–238 (SM) each bind L-ornithine. Residues 275–276 (CL) and R322 each bind carbamoyl phosphate.

This sequence belongs to the aspartate/ornithine carbamoyltransferase superfamily. OTCase family.

The protein resides in the cytoplasm. It carries out the reaction carbamoyl phosphate + L-ornithine = L-citrulline + phosphate + H(+). Its pathway is amino-acid degradation; L-arginine degradation via ADI pathway; carbamoyl phosphate from L-arginine: step 2/2. Functionally, reversibly catalyzes the transfer of the carbamoyl group from carbamoyl phosphate (CP) to the N(epsilon) atom of ornithine (ORN) to produce L-citrulline. The protein is Ornithine carbamoyltransferase, catabolic of Photobacterium profundum (strain SS9).